We begin with the raw amino-acid sequence, 438 residues long: Serine--tRNA ligase (438 aa).

Residue 245-247 coordinates L-serine; it reads TAE. 276–278 provides a ligand contact to ATP; sequence RSE. Glutamate 299 contributes to the L-serine binding site. 363–366 provides a ligand contact to ATP; it reads EISS. Serine 398 is a binding site for L-serine.

It belongs to the class-II aminoacyl-tRNA synthetase family. Type-1 seryl-tRNA synthetase subfamily. Homodimer. The tRNA molecule binds across the dimer.

The protein localises to the cytoplasm. The catalysed reaction is tRNA(Ser) + L-serine + ATP = L-seryl-tRNA(Ser) + AMP + diphosphate + H(+). The enzyme catalyses tRNA(Sec) + L-serine + ATP = L-seryl-tRNA(Sec) + AMP + diphosphate + H(+). It functions in the pathway aminoacyl-tRNA biosynthesis; selenocysteinyl-tRNA(Sec) biosynthesis; L-seryl-tRNA(Sec) from L-serine and tRNA(Sec): step 1/1. Functionally, catalyzes the attachment of serine to tRNA(Ser). Is also able to aminoacylate tRNA(Sec) with serine, to form the misacylated tRNA L-seryl-tRNA(Sec), which will be further converted into selenocysteinyl-tRNA(Sec). The chain is Serine--tRNA ligase from Delftia acidovorans (strain DSM 14801 / SPH-1).